Reading from the N-terminus, the 129-residue chain is Small ribosomal subunit protein uS11 (129 aa).

It belongs to the universal ribosomal protein uS11 family. In terms of assembly, part of the 30S ribosomal subunit. Interacts with proteins S7 and S18. Binds to IF-3.

Its function is as follows. Located on the platform of the 30S subunit, it bridges several disparate RNA helices of the 16S rRNA. Forms part of the Shine-Dalgarno cleft in the 70S ribosome. The sequence is that of Small ribosomal subunit protein uS11 from Staphylococcus saprophyticus subsp. saprophyticus (strain ATCC 15305 / DSM 20229 / NCIMB 8711 / NCTC 7292 / S-41).